Reading from the N-terminus, the 172-residue chain is uncharacterized protein (172 aa).

Positions 10 to 122 constitute a HotDog ACOT-type domain; sequence KESKVVKTSR…FLTFVALDSN (113 aa). The segment at 148 to 172 is disordered; sequence RANERKNRKRHSQALANALGTDKPW.

Belongs to the acyl coenzyme A hydrolase family.

This is an uncharacterized protein from Bacillus subtilis (strain 168).